Reading from the N-terminus, the 403-residue chain is ATP phosphoribosyltransferase regulatory subunit (403 aa).

Belongs to the class-II aminoacyl-tRNA synthetase family. HisZ subfamily. Heteromultimer composed of HisG and HisZ subunits.

It localises to the cytoplasm. It participates in amino-acid biosynthesis; L-histidine biosynthesis; L-histidine from 5-phospho-alpha-D-ribose 1-diphosphate: step 1/9. Its function is as follows. Required for the first step of histidine biosynthesis. May allow the feedback regulation of ATP phosphoribosyltransferase activity by histidine. This chain is ATP phosphoribosyltransferase regulatory subunit, found in Crocosphaera subtropica (strain ATCC 51142 / BH68) (Cyanothece sp. (strain ATCC 51142)).